We begin with the raw amino-acid sequence, 233 residues long: Nickel import system ATP-binding protein NikE (233 aa).

The ABC transporter domain maps to 2-228 (IELKHVTFGY…DRHPYTKELV (227 aa)). Residue 35 to 42 (GESGCGKS) participates in ATP binding.

Belongs to the ABC transporter superfamily. As to quaternary structure, the complex is composed of two ATP-binding proteins (NikD and NikE), two transmembrane proteins (NikB and NikC) and a solute-binding protein (NikA).

Its subcellular location is the cell membrane. The catalysed reaction is Ni(2+)(out) + ATP + H2O = Ni(2+)(in) + ADP + phosphate + H(+). Part of the ABC transporter complex NikABCDE (Opp2) involved in nickel import. Probably responsible for energy coupling to the transport system. The chain is Nickel import system ATP-binding protein NikE from Staphylococcus aureus (strain USA300).